The chain runs to 428 residues: Dihydroorotase (428 aa).

Residues His59 and His61 each contribute to the Zn(2+) site. Substrate contacts are provided by residues His61–Arg63 and Asn93. Zn(2+)-binding residues include Asp151, His178, and His231. Asn277 lines the substrate pocket. Position 304 (Asp304) interacts with Zn(2+). Residue Asp304 is part of the active site. Substrate is bound by residues His308 and Phe322–Gly323.

It belongs to the metallo-dependent hydrolases superfamily. DHOase family. Class I DHOase subfamily. Zn(2+) serves as cofactor.

The catalysed reaction is (S)-dihydroorotate + H2O = N-carbamoyl-L-aspartate + H(+). It participates in pyrimidine metabolism; UMP biosynthesis via de novo pathway; (S)-dihydroorotate from bicarbonate: step 3/3. Its function is as follows. Catalyzes the reversible cyclization of carbamoyl aspartate to dihydroorotate. The chain is Dihydroorotase from Bacillus anthracis (strain A0248).